Here is a 133-residue protein sequence, read N- to C-terminus: Cytochrome b5 (133 aa).

A Cytochrome b5 heme-binding domain is found at 4–86 (EKEYILDEIS…LKNYLVGNFK (83 aa)). Residues histidine 45 and histidine 69 each coordinate heme. The helical transmembrane segment at 108 to 128 (SGTGIMLIVLMALFAIAYGYY) threads the bilayer.

This sequence belongs to the cytochrome b5 family. Interacts with alternative squalene epoxidase PHATRDRAFT_45494.

It is found in the endoplasmic reticulum membrane. Its function is as follows. Hemoprotein that functions as an electron carrier for membrane bound monooxygenases involved in sterol biosynthesis. The chain is Cytochrome b5 from Phaeodactylum tricornutum (strain CCAP 1055/1).